The chain runs to 90 residues: Barrier-to-autointegration factor-like protein (90 aa).

As to quaternary structure, homodimer. Heterodimerizes with BANF1.

The protein localises to the nucleus. The protein resides in the cytoplasm. In terms of biological role, may play a role in BANF1 regulation and influence tissue-specific roles of BANF1. This chain is Barrier-to-autointegration factor-like protein (Banf2), found in Mus musculus (Mouse).